We begin with the raw amino-acid sequence, 213 residues long: Protein SRN2 (213 aa).

Residues 128-213 form the VPS37 C-terminal domain; sequence SKYVASWQDY…TWDKQGNLKY (86 aa).

Belongs to the VPS37 family. As to quaternary structure, component of the ESCRT-I complex (endosomal sorting complex required for transport I) which consists of STP22, VPS28, SRN2 and MVB12 in a 1:1:1:1 stoichiometry. Interacts with STP22 and MVB12.

It is found in the cytoplasm. It localises to the endosome. The protein localises to the late endosome membrane. In terms of biological role, component of the ESCRT-I complex, a regulator of vesicular trafficking process. Required for normal endocytic and biosynthetic traffic to the yeast vacuole. This chain is Protein SRN2 (SRN2), found in Saccharomyces cerevisiae (strain ATCC 204508 / S288c) (Baker's yeast).